Consider the following 121-residue polypeptide: UPF0738 protein RBAM_011600 (121 aa).

It belongs to the UPF0738 family.

In Bacillus velezensis (strain DSM 23117 / BGSC 10A6 / LMG 26770 / FZB42) (Bacillus amyloliquefaciens subsp. plantarum), this protein is UPF0738 protein RBAM_011600.